We begin with the raw amino-acid sequence, 284 residues long: Origin of replication complex subunit 6 (284 aa).

It belongs to the ORC6 family. Component of the origin recognition complex (ORC) composed of at least ORC1 (ORC1A or ORC1B), ORC2, ORC3, ORC4, ORC5 and ORC6. ORC is regulated in a cell-cycle and development dependent manner. It is sequentially assembled at the exit from anaphase of mitosis and disassembled as cells enter S phase. Interacts directly with ORC2, ORC3, ORC4 and ORC5. Follow a cell-cycle regulation with a peak at the G1/S-phase. Mostly expressed in siliques, flowers, flower buds and mature leaves, and, to a lower exent, in roots, leaves and stems.

The protein resides in the nucleus. In terms of biological role, component of the origin recognition complex (ORC) that binds origins of replication. DNA-binding is ATP-dependent. The specific DNA sequences that define origins of replication have not been identified yet. ORC is required to assemble the pre-replication complex necessary to initiate DNA replication. The polypeptide is Origin of replication complex subunit 6 (Arabidopsis thaliana (Mouse-ear cress)).